Consider the following 503-residue polypeptide: Probable cytosol aminopeptidase (503 aa).

The Mn(2+) site is built by K270 and D275. Residue K282 is part of the active site. D293, D352, and E354 together coordinate Mn(2+). Residue R356 is part of the active site.

This sequence belongs to the peptidase M17 family. It depends on Mn(2+) as a cofactor.

Its subcellular location is the cytoplasm. It carries out the reaction Release of an N-terminal amino acid, Xaa-|-Yaa-, in which Xaa is preferably Leu, but may be other amino acids including Pro although not Arg or Lys, and Yaa may be Pro. Amino acid amides and methyl esters are also readily hydrolyzed, but rates on arylamides are exceedingly low.. The catalysed reaction is Release of an N-terminal amino acid, preferentially leucine, but not glutamic or aspartic acids.. Its function is as follows. Presumably involved in the processing and regular turnover of intracellular proteins. Catalyzes the removal of unsubstituted N-terminal amino acids from various peptides. This Salmonella typhi protein is Probable cytosol aminopeptidase.